We begin with the raw amino-acid sequence, 374 residues long: DNA replication and repair protein RecF (374 aa).

34–41 (GNNGSGKT) lines the ATP pocket.

The protein belongs to the RecF family.

Its subcellular location is the cytoplasm. In terms of biological role, the RecF protein is involved in DNA metabolism; it is required for DNA replication and normal SOS inducibility. RecF binds preferentially to single-stranded, linear DNA. It also seems to bind ATP. The chain is DNA replication and repair protein RecF from Allorhizobium ampelinum (strain ATCC BAA-846 / DSM 112012 / S4) (Agrobacterium vitis (strain S4)).